Consider the following 118-residue polypeptide: Small ribosomal subunit protein uS13 (118 aa).

Residues 94-118 are disordered; that stretch reads SLPLRGQRTKTNARTRKGPRKPIRK.

Belongs to the universal ribosomal protein uS13 family. Part of the 30S ribosomal subunit. Forms a loose heterodimer with protein S19. Forms two bridges to the 50S subunit in the 70S ribosome.

Functionally, located at the top of the head of the 30S subunit, it contacts several helices of the 16S rRNA. In the 70S ribosome it contacts the 23S rRNA (bridge B1a) and protein L5 of the 50S subunit (bridge B1b), connecting the 2 subunits; these bridges are implicated in subunit movement. Contacts the tRNAs in the A and P-sites. This chain is Small ribosomal subunit protein uS13, found in Shewanella sediminis (strain HAW-EB3).